The primary structure comprises 88 residues: Putative regulatory protein Ava_1474 (88 aa).

It belongs to the RemA family.

This Trichormus variabilis (strain ATCC 29413 / PCC 7937) (Anabaena variabilis) protein is Putative regulatory protein Ava_1474.